The primary structure comprises 465 residues: Siroheme synthase (465 aa).

Positions 1–203 (MDFLPLFHSL…GRPAEAERLL (203 aa)) are precorrin-2 dehydrogenase /sirohydrochlorin ferrochelatase. NAD(+) contacts are provided by residues 22–23 (EV) and 43–44 (PQ). A Phosphoserine modification is found at serine 128. The uroporphyrinogen-III C-methyltransferase stretch occupies residues 217–465 (GEVYLVGAGP…AWFEGAREDA (249 aa)). Proline 226 contributes to the S-adenosyl-L-methionine binding site. The Proton acceptor role is filled by aspartate 249. Lysine 271 (proton donor) is an active-site residue. S-adenosyl-L-methionine contacts are provided by residues 302 to 304 (GGD), isoleucine 307, 332 to 333 (TA), methionine 384, and glycine 413.

It in the N-terminal section; belongs to the precorrin-2 dehydrogenase / sirohydrochlorin ferrochelatase family. This sequence in the C-terminal section; belongs to the precorrin methyltransferase family.

It catalyses the reaction uroporphyrinogen III + 2 S-adenosyl-L-methionine = precorrin-2 + 2 S-adenosyl-L-homocysteine + H(+). The enzyme catalyses precorrin-2 + NAD(+) = sirohydrochlorin + NADH + 2 H(+). It carries out the reaction siroheme + 2 H(+) = sirohydrochlorin + Fe(2+). The protein operates within cofactor biosynthesis; adenosylcobalamin biosynthesis; precorrin-2 from uroporphyrinogen III: step 1/1. It participates in cofactor biosynthesis; adenosylcobalamin biosynthesis; sirohydrochlorin from precorrin-2: step 1/1. Its pathway is porphyrin-containing compound metabolism; siroheme biosynthesis; precorrin-2 from uroporphyrinogen III: step 1/1. It functions in the pathway porphyrin-containing compound metabolism; siroheme biosynthesis; siroheme from sirohydrochlorin: step 1/1. The protein operates within porphyrin-containing compound metabolism; siroheme biosynthesis; sirohydrochlorin from precorrin-2: step 1/1. Multifunctional enzyme that catalyzes the SAM-dependent methylations of uroporphyrinogen III at position C-2 and C-7 to form precorrin-2 via precorrin-1. Then it catalyzes the NAD-dependent ring dehydrogenation of precorrin-2 to yield sirohydrochlorin. Finally, it catalyzes the ferrochelation of sirohydrochlorin to yield siroheme. The protein is Siroheme synthase of Pseudomonas aeruginosa (strain UCBPP-PA14).